The primary structure comprises 370 residues: 3-dehydroquinate synthase (370 aa).

NAD(+) is bound by residues 107-111, 131-132, lysine 144, and lysine 153; these read GVIGD and TS. Zn(2+) contacts are provided by glutamate 186, histidine 249, and histidine 267.

The protein belongs to the sugar phosphate cyclases superfamily. Dehydroquinate synthase family. Co(2+) is required as a cofactor. The cofactor is Zn(2+). Requires NAD(+) as cofactor.

The protein resides in the cytoplasm. The enzyme catalyses 7-phospho-2-dehydro-3-deoxy-D-arabino-heptonate = 3-dehydroquinate + phosphate. The protein operates within metabolic intermediate biosynthesis; chorismate biosynthesis; chorismate from D-erythrose 4-phosphate and phosphoenolpyruvate: step 2/7. In terms of biological role, catalyzes the conversion of 3-deoxy-D-arabino-heptulosonate 7-phosphate (DAHP) to dehydroquinate (DHQ). This is 3-dehydroquinate synthase from Jannaschia sp. (strain CCS1).